The sequence spans 428 residues: Enolase (428 aa).

Q162 serves as a coordination point for (2R)-2-phosphoglycerate. E204 functions as the Proton donor in the catalytic mechanism. Mg(2+) contacts are provided by D241, E283, and D310. Positions 335, 364, 365, and 386 each coordinate (2R)-2-phosphoglycerate. The Proton acceptor role is filled by K335.

This sequence belongs to the enolase family. Requires Mg(2+) as cofactor.

Its subcellular location is the cytoplasm. The protein resides in the secreted. The protein localises to the cell surface. It catalyses the reaction (2R)-2-phosphoglycerate = phosphoenolpyruvate + H2O. It participates in carbohydrate degradation; glycolysis; pyruvate from D-glyceraldehyde 3-phosphate: step 4/5. Functionally, catalyzes the reversible conversion of 2-phosphoglycerate (2-PG) into phosphoenolpyruvate (PEP). It is essential for the degradation of carbohydrates via glycolysis. This is Enolase from Rhodococcus opacus (strain B4).